We begin with the raw amino-acid sequence, 411 residues long: Imidazolonepropionase (411 aa).

Fe(3+) is bound by residues His75 and His77. Zn(2+)-binding residues include His75 and His77. Arg84, Tyr147, and His180 together coordinate 4-imidazolone-5-propanoate. Tyr147 is a binding site for N-formimidoyl-L-glutamate. His245 is a binding site for Fe(3+). His245 provides a ligand contact to Zn(2+). A 4-imidazolone-5-propanoate-binding site is contributed by Gln248. Asp320 contacts Fe(3+). Residue Asp320 participates in Zn(2+) binding. N-formimidoyl-L-glutamate contacts are provided by Asn322 and Gly324. Thr325 is a 4-imidazolone-5-propanoate binding site.

The protein belongs to the metallo-dependent hydrolases superfamily. HutI family. Zn(2+) serves as cofactor. It depends on Fe(3+) as a cofactor.

The protein localises to the cytoplasm. The catalysed reaction is 4-imidazolone-5-propanoate + H2O = N-formimidoyl-L-glutamate. Its pathway is amino-acid degradation; L-histidine degradation into L-glutamate; N-formimidoyl-L-glutamate from L-histidine: step 3/3. Catalyzes the hydrolytic cleavage of the carbon-nitrogen bond in imidazolone-5-propanoate to yield N-formimidoyl-L-glutamate. It is the third step in the universal histidine degradation pathway. The polypeptide is Imidazolonepropionase (Photobacterium profundum (strain SS9)).